We begin with the raw amino-acid sequence, 206 residues long: Large ribosomal subunit protein uL4 (206 aa).

The span at 43 to 52 (NKRQGTQSAK) shows a compositional bias: polar residues. Positions 43-86 (NKRQGTQSAKTRAEVSGGGRKPWRQKGTGHARQGSTRSPQWKGG) are disordered.

Belongs to the universal ribosomal protein uL4 family. In terms of assembly, part of the 50S ribosomal subunit.

Functionally, one of the primary rRNA binding proteins, this protein initially binds near the 5'-end of the 23S rRNA. It is important during the early stages of 50S assembly. It makes multiple contacts with different domains of the 23S rRNA in the assembled 50S subunit and ribosome. Its function is as follows. Forms part of the polypeptide exit tunnel. The sequence is that of Large ribosomal subunit protein uL4 from Lachnoclostridium phytofermentans (strain ATCC 700394 / DSM 18823 / ISDg) (Clostridium phytofermentans).